Here is an 874-residue protein sequence, read N- to C-terminus: Ectonucleotide pyrophosphatase/phosphodiesterase family member 3 (874 aa).

Residues 1–11 (MDSRLALATEE) are Cytoplasmic-facing. Residues 12–30 (PIKKDSLKKYKILCVVLLA) traverse the membrane as a helical; Signal-anchor for type II membrane protein segment. The Extracellular portion of the chain corresponds to 31–874 (LLVIVSLGLG…TYLPTFETII (844 aa)). SMB domains lie at 51–93 (QGSC…VKST) and 94–138 (QIWT…GESP). 13 cysteine pairs are disulfide-bonded: cysteine 54-cysteine 58, cysteine 54-cysteine 71, cysteine 58-cysteine 89, cysteine 69-cysteine 71, cysteine 69-cysteine 82, cysteine 75-cysteine 81, cysteine 82-cysteine 89, cysteine 98-cysteine 115, cysteine 103-cysteine 133, cysteine 113-cysteine 126, cysteine 119-cysteine 125, cysteine 144-cysteine 190, and cysteine 152-cysteine 364. Residues 78-80 (RGD) carry the Cell attachment site motif. The phosphodiesterase stretch occupies residues 160–544 (PVILFSMDGF…HGSLNHLLKT (385 aa)). Aspartate 167 contacts Zn(2+). Residue lysine 204 coordinates ATP. Residue threonine 205 participates in Zn(2+) binding. Threonine 205 functions as the Nucleophile in the catalytic mechanism. Asparagine 226 is an ATP binding site. N-linked (GlcNAc...) asparagine glycosylation occurs at asparagine 236. Aspartate 275 serves as a coordination point for ATP. Asparagine 279 and asparagine 288 each carry an N-linked (GlcNAc...) asparagine glycan. Residue tyrosine 289 coordinates ATP. Zn(2+)-binding residues include aspartate 325, histidine 329, aspartate 372, and histidine 373. Intrachain disulfides connect cysteine 380–cysteine 477, cysteine 428–cysteine 817, cysteine 561–cysteine 623, cysteine 574–cysteine 679, cysteine 576–cysteine 664, and cysteine 786–cysteine 796. Asparagine 425 carries N-linked (GlcNAc...) asparagine glycosylation. Zn(2+) is bound at residue histidine 482. N-linked (GlcNAc...) asparagine glycans are attached at residues asparagine 532, asparagine 594, asparagine 687, and asparagine 701. A nuclease region spans residues 581 to 874 (NTPGLEEQAN…TYLPTFETII (294 aa)). 5 residues coordinate Ca(2+): aspartate 751, asparagine 753, aspartate 755, histidine 757, and aspartate 759. The N-linked (GlcNAc...) asparagine glycan is linked to asparagine 820.

As to quaternary structure, monomer and homodimer. The cofactor is Zn(2+). In terms of processing, N-glycosylated. N-glycosylation is necessary for normal transport to the cell membrane, but is not the apical targeting signal. As to expression, detected at the tip of villi in the small intestine. Detected on basophils and mast cells (at protein level). Detected in the epithelial layer of the small intestine; expression is higher in the proximal part and lower in the distal part of the small intestine.

The protein localises to the cell membrane. It localises to the apical cell membrane. The protein resides in the secreted. The catalysed reaction is a ribonucleoside 5'-triphosphate + H2O = a ribonucleoside 5'-phosphate + diphosphate + H(+). It catalyses the reaction UDP-N-acetyl-alpha-D-glucosamine + H2O = N-acetyl-alpha-D-glucosamine 1-phosphate + UMP + 2 H(+). It carries out the reaction ATP + H2O = AMP + diphosphate + H(+). The enzyme catalyses CTP + H2O = CMP + diphosphate + H(+). The catalysed reaction is GTP + H2O = GMP + diphosphate + H(+). It catalyses the reaction UTP + H2O = UMP + diphosphate + H(+). It carries out the reaction Hydrolytically removes 5'-nucleotides successively from the 3'-hydroxy termini of 3'-hydroxy-terminated oligonucleotides.. The enzyme catalyses P(1),P(3)-bis(5'-adenosyl) triphosphate + H2O = AMP + ADP + 2 H(+). The catalysed reaction is P(1),P(4)-bis(5'-adenosyl) tetraphosphate + H2O = AMP + ATP + 2 H(+). It catalyses the reaction P(1),P(5)-bis(5'-adenosyl) pentaphosphate + H2O = adenosine 5'-tetraphosphate + AMP + 2 H(+). It carries out the reaction P(1),P(4)-bis(5'-guanosyl) tetraphosphate + H2O = GMP + GTP + 2 H(+). Functionally, hydrolase that metabolizes extracellular nucleotides, including ATP, GTP, UTP and CTP. Limits mast cells and basophils response during inflammation and during the chronic phases of allergic responses by eliminating extracellular ATP, a signaling molecule activating these cells in an autocrine manner. Metabolizes extracellular ATP in the lumen of the small intestine, and thereby prevents ATP-induced apoptosis of intestinal plasmacytoid dendritic cells. Has a broad specificity and can also hydrolyze UDP-GlcNAc into UMP and GlcNAc-1-phosphate and potentially several other intracellular nucleotide sugars, including UDP-GalNAc, CMP-NeuAc, GDP-Fuc, and UDP-GlcA. Thereby, could modulate glycan biosynthesis and protein glycosylation. Can hydrolyze extracellular dinucleoside polyphosphates, including the vasoactive adenosine polyphosphates as well. In addition, displays an alkaline phosphodiesterase activity in vitro. The protein is Ectonucleotide pyrophosphatase/phosphodiesterase family member 3 of Mus musculus (Mouse).